The primary structure comprises 147 residues: Endoribonuclease YbeY (147 aa).

Residues His109, His113, and His119 each contribute to the Zn(2+) site.

Belongs to the endoribonuclease YbeY family. It depends on Zn(2+) as a cofactor.

Its subcellular location is the cytoplasm. Functionally, single strand-specific metallo-endoribonuclease involved in late-stage 70S ribosome quality control and in maturation of the 3' terminus of the 16S rRNA. The protein is Endoribonuclease YbeY of Thiobacillus denitrificans (strain ATCC 25259 / T1).